Here is a 215-residue protein sequence, read N- to C-terminus: Cytokinin riboside 5'-monophosphate phosphoribohydrolase LOG4 (215 aa).

Substrate is bound by residues Glu-84, 102–103 (RK), 119–125 (GYGTLEE), and Thr-131.

This sequence belongs to the LOG family. Expressed in roots and shoots. Detected in root procambium, lateral root primordia, vascular tissues of cotyledons, leaves and stems, shoot apical meristem, axillary buds, young inflorescences, fruit abscission zones and basal part of ovules.

It is found in the cytoplasm. The protein resides in the nucleus. It catalyses the reaction N(6)-(dimethylallyl)adenosine 5'-phosphate + H2O = N(6)-dimethylallyladenine + D-ribose 5-phosphate. It carries out the reaction 9-ribosyl-trans-zeatin 5'-phosphate + H2O = trans-zeatin + D-ribose 5-phosphate. Functionally, cytokinin-activating enzyme working in the direct activation pathway. Phosphoribohydrolase that converts inactive cytokinin nucleotides to the biologically active free-base forms. This Arabidopsis thaliana (Mouse-ear cress) protein is Cytokinin riboside 5'-monophosphate phosphoribohydrolase LOG4 (LOG4).